The following is a 671-amino-acid chain: DNA ligase (671 aa).

NAD(+)-binding positions include 36–40 (DHVYD), 85–86 (SM), and Glu-115. Catalysis depends on Lys-117, which acts as the N6-AMP-lysine intermediate. NAD(+) contacts are provided by Arg-138, Glu-172, Lys-287, and Lys-311. Zn(2+)-binding residues include Cys-405, Cys-408, Cys-423, and Cys-428. The BRCT domain maps to 588-671 (AADNFFKGKT…SKIEEKDTEK (84 aa)).

The protein belongs to the NAD-dependent DNA ligase family. LigA subfamily. Mg(2+) is required as a cofactor. Mn(2+) serves as cofactor.

The enzyme catalyses NAD(+) + (deoxyribonucleotide)n-3'-hydroxyl + 5'-phospho-(deoxyribonucleotide)m = (deoxyribonucleotide)n+m + AMP + beta-nicotinamide D-nucleotide.. Its function is as follows. DNA ligase that catalyzes the formation of phosphodiester linkages between 5'-phosphoryl and 3'-hydroxyl groups in double-stranded DNA using NAD as a coenzyme and as the energy source for the reaction. It is essential for DNA replication and repair of damaged DNA. The chain is DNA ligase from Lactobacillus delbrueckii subsp. bulgaricus (strain ATCC 11842 / DSM 20081 / BCRC 10696 / JCM 1002 / NBRC 13953 / NCIMB 11778 / NCTC 12712 / WDCM 00102 / Lb 14).